Reading from the N-terminus, the 334-residue chain is 5-formaminoimidazole-4-carboxamide-1-(beta)-D-ribofuranosyl 5'-monophosphate synthetase (334 aa).

Residues Ser10, His11, Ser71, and His75 each contribute to the 5-amino-1-(5-phospho-beta-D-ribosyl)imidazole-4-carboxamide site. Positions 78–325 (IELVENMKVP…IAMEIREAIE (248 aa)) constitute an ATP-grasp domain. ATP is bound by residues 132 to 142 (KPHGAKGGKGY), 173 to 176 (QEYV), and Glu204. Position 232 (Asn232) interacts with 5-amino-1-(5-phospho-beta-D-ribosyl)imidazole-4-carboxamide. Residues Glu270 and Glu283 each coordinate Mg(2+).

This sequence belongs to the phosphohexose mutase family. In terms of assembly, homotrimer and homohexamer. The cofactor is Mg(2+). Requires Mn(2+) as cofactor.

The catalysed reaction is 5-amino-1-(5-phospho-beta-D-ribosyl)imidazole-4-carboxamide + formate + ATP = 5-formamido-1-(5-phospho-D-ribosyl)imidazole-4-carboxamide + ADP + phosphate. It participates in purine metabolism; IMP biosynthesis via de novo pathway; 5-formamido-1-(5-phospho-D-ribosyl)imidazole-4-carboxamide from 5-amino-1-(5-phospho-D-ribosyl)imidazole-4-carboxamide (formate route): step 1/1. Functionally, catalyzes the ATP- and formate-dependent formylation of 5-aminoimidazole-4-carboxamide-1-beta-d-ribofuranosyl 5'-monophosphate (AICAR) to 5-formaminoimidazole-4-carboxamide-1-beta-d-ribofuranosyl 5'-monophosphate (FAICAR) in the absence of folates. The sequence is that of 5-formaminoimidazole-4-carboxamide-1-(beta)-D-ribofuranosyl 5'-monophosphate synthetase from Pyrococcus furiosus (strain ATCC 43587 / DSM 3638 / JCM 8422 / Vc1).